Consider the following 512-residue polypeptide: Histidine ammonia-lyase (512 aa).

Residues 144-146 (ASG) constitute a cross-link (5-imidazolinone (Ala-Gly)). S145 is modified (2,3-didehydroalanine (Ser)).

The protein belongs to the PAL/histidase family. In terms of processing, contains an active site 4-methylidene-imidazol-5-one (MIO), which is formed autocatalytically by cyclization and dehydration of residues Ala-Ser-Gly.

Its subcellular location is the cytoplasm. It catalyses the reaction L-histidine = trans-urocanate + NH4(+). Its pathway is amino-acid degradation; L-histidine degradation into L-glutamate; N-formimidoyl-L-glutamate from L-histidine: step 1/3. This chain is Histidine ammonia-lyase, found in Desulfotalea psychrophila (strain LSv54 / DSM 12343).